We begin with the raw amino-acid sequence, 267 residues long: Cytochrome b (267 aa).

The next 4 helical transmembrane spans lie at 4–24 (FGSL…LLAA), 48–69 (WLIR…YLHI), 84–104 (WNTG…GYVL), and 149–169 (FFTL…IHLT). Heme b contacts are provided by histidine 54 and histidine 68. Residues histidine 153 and histidine 167 each contribute to the heme b site. Histidine 172 provides a ligand contact to a ubiquinone. Helical transmembrane passes span 197 to 217 (LKDI…ALFA) and 259 to 267 (LGGVLALAA).

The protein belongs to the cytochrome b family. The cytochrome bc1 complex contains 11 subunits: 3 respiratory subunits (MT-CYB, CYC1 and UQCRFS1), 2 core proteins (UQCRC1 and UQCRC2) and 6 low-molecular weight proteins (UQCRH/QCR6, UQCRB/QCR7, UQCRQ/QCR8, UQCR10/QCR9, UQCR11/QCR10 and a cleavage product of UQCRFS1). This cytochrome bc1 complex then forms a dimer. The cofactor is heme b.

It localises to the mitochondrion inner membrane. In terms of biological role, component of the ubiquinol-cytochrome c reductase complex (complex III or cytochrome b-c1 complex) that is part of the mitochondrial respiratory chain. The b-c1 complex mediates electron transfer from ubiquinol to cytochrome c. Contributes to the generation of a proton gradient across the mitochondrial membrane that is then used for ATP synthesis. The sequence is that of Cytochrome b (MT-CYB) from Raphus cucullatus (Dodo).